Consider the following 374-residue polypeptide: Ribosomal RNA large subunit methyltransferase G (374 aa).

This sequence belongs to the methyltransferase superfamily. RlmG family.

Its subcellular location is the cytoplasm. The enzyme catalyses guanosine(1835) in 23S rRNA + S-adenosyl-L-methionine = N(2)-methylguanosine(1835) in 23S rRNA + S-adenosyl-L-homocysteine + H(+). Functionally, specifically methylates the guanine in position 1835 (m2G1835) of 23S rRNA. In Pseudomonas entomophila (strain L48), this protein is Ribosomal RNA large subunit methyltransferase G.